Consider the following 462-residue polypeptide: Sensor histidine kinase RegB (462 aa).

Over 1 to 25 (MILGPDGILNRDTRGDWVRLRTLIL) the chain is Cytoplasmic. Residues 26 to 45 (LRWMAVAGQLAAIVVTDWYL) form a helical membrane-spanning segment. Over 46 to 51 (GVRLPM) the chain is Extracellular. The helical transmembrane segment at 52-70 (GLCFMAVGASVIANVIATF) threads the bilayer. At 71–78 (VFPQNRRL) the chain is on the cytoplasmic side. The helical transmembrane segment at 79 to 96 (TEFQALMILLFDLTQLSF) threads the bilayer. Residues 97 to 103 (LLFLTGG) lie on the Extracellular side of the membrane. The helical transmembrane segment at 104–123 (LTNPFALLILAPVTISALAL) threads the bilayer. Residues 124-129 (ELRTTV) are Cytoplasmic-facing. Residues 130–149 (ILGAIAIGLLTFTAYFHLPL) traverse the membrane as a helical segment. At 150 to 164 (ILADGSSLSVPRMFE) the chain is on the extracellular side. Residues 165 to 182 (FGFWLAIVIGILFLGLYS) form a helical membrane-spanning segment. Residues 183–462 (RRVAIEIRSM…PLGENVLIQT (280 aa)) lie on the Cytoplasmic side of the membrane. The region spanning 218–445 (AAAHELGTPL…IVEVIWPVDR (228 aa)) is the Histidine kinase domain. His221 bears the Phosphohistidine; by autocatalysis mark.

It localises to the cell inner membrane. It catalyses the reaction ATP + protein L-histidine = ADP + protein N-phospho-L-histidine.. Functionally, member of the two-component regulatory system RegB/RegA. Involved in the positive regulation of photosynthesis gene expression in response to anaerobiosis. Also involved in positive regulation of the cbbI and cbbII Calvin cycle CO2 fixation operons, as well as in regulation of expression of genes involved in alternative CO2 fixation pathways. Phosphorylates RegA/PrrA. This is Sensor histidine kinase RegB (regB) from Cereibacter sphaeroides (strain ATCC 17023 / DSM 158 / JCM 6121 / CCUG 31486 / LMG 2827 / NBRC 12203 / NCIMB 8253 / ATH 2.4.1.) (Rhodobacter sphaeroides).